The sequence spans 358 residues: DnaJ homolog subfamily B member 11 (358 aa).

An N-terminal signal peptide occupies residues 1–22; the sequence is MAPQNLGTLCLLLLYLLGAAIA. Residues 25–90 enclose the J domain; it reads DFYKILGVPR…EKRKQYDTYG (66 aa). Position 188 is a phosphothreonine (Thr188). Asn261 carries an N-linked (GlcNAc...) asparagine glycan.

Part of a large chaperone multiprotein complex comprising DNAJB11, HSP90B1, HSPA5, HYOU, PDIA2, PDIA4, PDIA6, PPIB, SDF2L1, UGGT1 and very small amounts of ERP29, but not, or at very low levels, CALR nor CANX. Binds to denatured substrates in an ATP-independent manner. Interacts via the J domain with HSPA5 in an ATP-dependent manner. In terms of processing, contains high-mannose Endo H-sensitive carbohydrates. Cys-169, Cys-171, Cys-193 and Cys-196 form intramolecular disulfide bonds. The preferential partner for each Cys is not known. As to expression, pancreas.

Its subcellular location is the endoplasmic reticulum lumen. Its function is as follows. As a co-chaperone for HSPA5 it is required for proper folding, trafficking or degradation of proteins. Binds directly to both unfolded proteins that are substrates for ERAD and nascent unfolded peptide chains, but dissociates from the HSPA5-unfolded protein complex before folding is completed. May help recruiting HSPA5 and other chaperones to the substrate. Stimulates HSPA5 ATPase activity. It is necessary for maturation and correct trafficking of PKD1. In Canis lupus familiaris (Dog), this protein is DnaJ homolog subfamily B member 11 (DNAJB11).